A 38-amino-acid polypeptide reads, in one-letter code: Photosystem I reaction center subunit IX (38 aa).

The helical transmembrane segment at 4–24 (FLTAAPVVAAIWFTATAGILI) threads the bilayer.

Belongs to the PsaJ family.

It localises to the cellular thylakoid membrane. In terms of biological role, may help in the organization of the PsaE and PsaF subunits. This Synechococcus sp. (strain CC9605) protein is Photosystem I reaction center subunit IX.